The chain runs to 159 residues: Olfactory receptor-like protein COR8 (159 aa).

Residues 1–16 (VAICNPLLYTISMPKS) are Cytoplasmic-facing. The chain crosses the membrane as a helical span at residues 17-41 (LCMKLVAGSYLGGVLNSLTQTCCLL). Residues 42-82 (PLPFCGPNVINHYFCDTNPLLKLTCSDGRLNELLLVTFNGT) lie on the Extracellular side of the membrane. The N-linked (GlcNAc...) asparagine glycan is linked to Asn80. The chain crosses the membrane as a helical span at residues 83–103 (ISMTVLLIIVISYVYILVSIL). Residues 104–116 (SIRSARGRHKAFS) lie on the Cytoplasmic side of the membrane. A helical membrane pass occupies residues 117–137 (TCASHLLTVTLFYVPAGLSHM). Residues 138-148 (QPGSKYSLDME) lie on the Extracellular side of the membrane. Residues 149–159 (KVTAVFYTLLV) traverse the membrane as a helical segment.

This sequence belongs to the G-protein coupled receptor 1 family.

It localises to the cell membrane. In terms of biological role, odorant receptor. This is Olfactory receptor-like protein COR8 (COR8) from Gallus gallus (Chicken).